Here is a 156-residue protein sequence, read N- to C-terminus: MKLQLVAVGTRMPAWVTTGFEEYQRRFPRDMAFELIEIPAGKRGKNADIARILQKEGEQMLAAIPKGNHIVSLDLPGKNWTTPELATQLNRWQLDGRDVSLLIGGPEGLAPACKQAANQSWCLSALTLPHPLVRVLVAESLYRAWSINNNHPYHRE.

S-adenosyl-L-methionine-binding positions include leucine 73, glycine 104, and 123–128; that span reads LSALTL.

It belongs to the RNA methyltransferase RlmH family. In terms of assembly, homodimer.

It is found in the cytoplasm. It carries out the reaction pseudouridine(1915) in 23S rRNA + S-adenosyl-L-methionine = N(3)-methylpseudouridine(1915) in 23S rRNA + S-adenosyl-L-homocysteine + H(+). Functionally, specifically methylates the pseudouridine at position 1915 (m3Psi1915) in 23S rRNA. The chain is Ribosomal RNA large subunit methyltransferase H from Shewanella loihica (strain ATCC BAA-1088 / PV-4).